Reading from the N-terminus, the 153-residue chain is Peptidoglycan-associated lipoprotein (153 aa).

Residues 1–19 (MNKFVKSLLVAGSVAALAA) form the signal peptide. Cysteine 20 carries N-palmitoyl cysteine lipidation. Cysteine 20 carries S-diacylglycerol cysteine lipidation. The region spanning 40 to 153 (SVADLQQRYN…SKNRRAVLAY (114 aa)) is the OmpA-like domain. 2 peptidoglycan binding regions span residues 55–56 (FD) and 97–101 (YNIAL).

Belongs to the Pal lipoprotein family. In terms of assembly, the Tol-Pal system is composed of five core proteins: the inner membrane proteins TolA, TolQ and TolR, the periplasmic protein TolB and the outer membrane protein Pal. They form a network linking the inner and outer membranes and the peptidoglycan layer.

Its subcellular location is the cell outer membrane. Its function is as follows. Part of the Tol-Pal system, which plays a role in outer membrane invagination during cell division and is important for maintaining outer membrane integrity. The chain is Peptidoglycan-associated lipoprotein from Haemophilus influenzae (strain ATCC 51907 / DSM 11121 / KW20 / Rd).